Here is a 54-residue protein sequence, read N- to C-terminus: UPF0391 membrane protein Oant_1245 (54 aa).

2 helical membrane-spanning segments follow: residues 5–25 and 29–48; these read ALVF…GIAG and GIAQ…SLIA.

It belongs to the UPF0391 family.

The protein localises to the cell membrane. This chain is UPF0391 membrane protein Oant_1245, found in Brucella anthropi (strain ATCC 49188 / DSM 6882 / CCUG 24695 / JCM 21032 / LMG 3331 / NBRC 15819 / NCTC 12168 / Alc 37) (Ochrobactrum anthropi).